Here is a 603-residue protein sequence, read N- to C-terminus: NADH-ubiquinone oxidoreductase chain 5 (603 aa).

Helical transmembrane passes span 4–24 (YATM…GALI), 38–58 (SIIA…MCLD), 87–107 (MTFI…SLWY), 122–142 (LIFL…QLFI), 144–160 (WEGV…WWYA), 171–191 (AILY…WFLL), 211–233 (TPLL…HPWL), 241–261 (TPVS…FLLI), 272–292 (LIQT…AVCA), 301–320 (IVAF…IGIN), 325–347 (AFLH…GSII), 370–390 (STSL…TGFY), 405–422 (NAWA…TSAY), 457–477 (LTIG…PMST), 482–502 (IPLY…LTAL), and 582–602 (GMIK…LLLI).

The protein belongs to the complex I subunit 5 family. In terms of assembly, core subunit of respiratory chain NADH dehydrogenase (Complex I) which is composed of 45 different subunits.

It localises to the mitochondrion inner membrane. The enzyme catalyses a ubiquinone + NADH + 5 H(+)(in) = a ubiquinol + NAD(+) + 4 H(+)(out). Functionally, core subunit of the mitochondrial membrane respiratory chain NADH dehydrogenase (Complex I) which catalyzes electron transfer from NADH through the respiratory chain, using ubiquinone as an electron acceptor. Essential for the catalytic activity and assembly of complex I. The polypeptide is NADH-ubiquinone oxidoreductase chain 5 (MT-ND5) (Pan troglodytes (Chimpanzee)).